We begin with the raw amino-acid sequence, 368 residues long: MDSYEYGELLKELSTKRDNIAKIIKPDSIENRLGEIEALEHSEGFWNDATKAGEVQKEKRKLERILKKYEEANQAINDAKELFEIATQDNDEETLGLLFEESGHLEKEIKSVEIEVMLSGEHDGSNAIITIHPGAGGTESQDWASILYRMYLRWAERRGFKVEVLDYQEGEEAGIKDASFIIKGENAYGYLKVENGIHRLVRISPFDANAKRHTSFTSVMVSPEVDDDIDIEIEEKDLRLDTYRASGAGGQHVNKTESAIRITHIPTGIVVQCQNDRSQHKNKATAFKMLKSRLYELELAKRSAEYDSMEKSEIGWGHQIRSYVLAPYQQVKDTRSNIAYSNIEAILDGDLDELLEGVLISQFDQPGE.

Gln-251 bears the N5-methylglutamine mark.

Belongs to the prokaryotic/mitochondrial release factor family. In terms of processing, methylated by PrmC. Methylation increases the termination efficiency of RF2.

The protein localises to the cytoplasm. In terms of biological role, peptide chain release factor 2 directs the termination of translation in response to the peptide chain termination codons UGA and UAA. The chain is Peptide chain release factor 2 from Wolinella succinogenes (strain ATCC 29543 / DSM 1740 / CCUG 13145 / JCM 31913 / LMG 7466 / NCTC 11488 / FDC 602W) (Vibrio succinogenes).